The sequence spans 70 residues: ATP synthase subunit c (70 aa).

Helical transmembrane passes span 3–23 (ALAA…IGIA) and 44–64 (LFFI…VIAI).

The protein belongs to the ATPase C chain family. As to quaternary structure, F-type ATPases have 2 components, F(1) - the catalytic core - and F(0) - the membrane proton channel. F(1) has five subunits: alpha(3), beta(3), gamma(1), delta(1), epsilon(1). F(0) has three main subunits: a(1), b(2) and c(10-14). The alpha and beta chains form an alternating ring which encloses part of the gamma chain. F(1) is attached to F(0) by a central stalk formed by the gamma and epsilon chains, while a peripheral stalk is formed by the delta and b chains.

It localises to the cell membrane. In terms of biological role, f(1)F(0) ATP synthase produces ATP from ADP in the presence of a proton or sodium gradient. F-type ATPases consist of two structural domains, F(1) containing the extramembraneous catalytic core and F(0) containing the membrane proton channel, linked together by a central stalk and a peripheral stalk. During catalysis, ATP synthesis in the catalytic domain of F(1) is coupled via a rotary mechanism of the central stalk subunits to proton translocation. Its function is as follows. Key component of the F(0) channel; it plays a direct role in translocation across the membrane. A homomeric c-ring of between 10-14 subunits forms the central stalk rotor element with the F(1) delta and epsilon subunits. The sequence is that of ATP synthase subunit c from Caldicellulosiruptor saccharolyticus (strain ATCC 43494 / DSM 8903 / Tp8T 6331).